Here is a 621-residue protein sequence, read N- to C-terminus: E3 SUMO-protein ligase PIAS2 (621 aa).

The 35-residue stretch at 11–45 (VSSFRVSELQVLLGFAGRNKSGRKHDLLMRALHLL) folds into the SAP domain. The short motif at 19-23 (LQVLL) is the LXXLL motif element. Residues K46 and K249 each participate in a glycyl lysine isopeptide (Lys-Gly) (interchain with G-Cter in SUMO2) cross-link. The 166-residue stretch at 134-299 (QPSPPIPPVH…SMSVYLVRQL (166 aa)) folds into the PINIT domain. The segment at 331 to 412 (PDSEIATTSL…FMEILNDCSD (82 aa)) adopts an SP-RING-type zinc-finger fold. Residues C362, H364, C385, and C388 each coordinate Zn(2+). Glycyl lysine isopeptide (Lys-Gly) (interchain with G-Cter in SUMO2) cross-links involve residues K430, K435, K443, and K452. Positions 467–473 (VDVIDLT) are SUMO1-binding. Phosphoserine occurs at positions 476, 477, and 478. A Nuclear localization signal motif is present at residues 484–492 (PPAKRKCIF). Residue K489 forms a Glycyl lysine isopeptide (Lys-Gly) (interchain with G-Cter in SUMO2) linkage. S499 is modified (phosphoserine). Glycyl lysine isopeptide (Lys-Gly) (interchain with G-Cter in SUMO2) cross-links involve residues K502 and Q562. Low complexity predominate over residues 579 to 610 (SSTSVTTTSSHESSTHVSSSSSRSETGVITSS). The segment at 579 to 621 (SSTSVTTTSSHESSTHVSSSSSRSETGVITSSGSNIPDIISLD) is disordered.

It belongs to the PIAS family. Binds SUMO1 and UBE2I. Interacts with AXIN1, JUN, MDM2, PARK7, TP53 and TP73 isoform alpha, but not TP73 isoform beta. Interacts with STAT4 following IL12 and IFN-alpha stimulation of T-cells. Interacts also with GTF2I, GTF2IRD1, IKFZ1, DAB2 and MSX2, as well as with several steroid receptors, including ESR1, ESR2, NR3C1, PGR, AR, and with NCOA2. Sumoylation of a target protein seems to enhance the interaction. Binds to sumoylated ELK1. Binds DNA, such as CDKN1A promoter, in a sequence-specific manner. Interacts with PLAG1. Interacts with KLF8; the interaction results in SUMO ligation and repression of KLF8 transcriptional activity and of its cell cycle progression into G(1) phase. PIAS2-beta interacts with IFIH1/MDA5. Isoform PIAS2-alpha interacts with PML (isoform PML-12). Interacts with PRDM1/Blimp-1. In terms of processing, sumoylated. In terms of tissue distribution, mainly expressed in testis. Isoform 3 is expressed predominantly in adult testis, weakly in pancreas, embryonic testis and sperm, and at very low levels in other organs.

The protein localises to the nucleus speckle. It is found in the nucleus. It localises to the PML body. It functions in the pathway protein modification; protein sumoylation. Its function is as follows. Functions as an E3-type small ubiquitin-like modifier (SUMO) ligase, stabilizing the interaction between UBE2I and the substrate, and as a SUMO-tethering factor. Plays a crucial role as a transcriptional coregulator in various cellular pathways, including the STAT pathway, the p53 pathway and the steroid hormone signaling pathway. The effects of this transcriptional coregulation, transactivation or silencing may vary depending upon the biological context and the PIAS2 isoform studied. However, it seems to be mostly involved in gene silencing. Binds to sumoylated ELK1 and enhances its transcriptional activity by preventing recruitment of HDAC2 by ELK1, thus reversing SUMO-mediated repression of ELK1 transactivation activity. Isoform PIAS2-beta, but not isoform PIAS2-alpha, promotes MDM2 sumoylation. Isoform PIAS2-alpha promotes PARK7 sumoylation. Isoform PIAS2-beta promotes NCOA2 sumoylation more efficiently than isoform PIAS2-alpha. Isoform PIAS2-alpha sumoylates PML at'Lys-65' and 'Lys-160'. This chain is E3 SUMO-protein ligase PIAS2 (PIAS2), found in Homo sapiens (Human).